A 488-amino-acid chain; its full sequence is N-succinylglutamate 5-semialdehyde dehydrogenase (488 aa).

221–226 (GSSRTG) lines the NAD(+) pocket. Active-site residues include Glu244 and Cys278.

Belongs to the aldehyde dehydrogenase family. AstD subfamily.

It catalyses the reaction N-succinyl-L-glutamate 5-semialdehyde + NAD(+) + H2O = N-succinyl-L-glutamate + NADH + 2 H(+). It functions in the pathway amino-acid degradation; L-arginine degradation via AST pathway; L-glutamate and succinate from L-arginine: step 4/5. Its function is as follows. Catalyzes the NAD-dependent reduction of succinylglutamate semialdehyde into succinylglutamate. This is N-succinylglutamate 5-semialdehyde dehydrogenase from Pseudomonas syringae pv. syringae (strain B728a).